The following is a 287-amino-acid chain: Shikimate dehydrogenase (NADP(+)) (287 aa).

Residues 21–23 (SKS) and Thr68 each bind shikimate. The active-site Proton acceptor is Lys72. The shikimate site is built by Asn93 and Asp109. NADP(+) contacts are provided by residues 133–137 (GAGGA), 157–162 (NRTQTK), and Met226. Tyr228 serves as a coordination point for shikimate. Gly250 contacts NADP(+).

It belongs to the shikimate dehydrogenase family. In terms of assembly, homodimer.

The catalysed reaction is shikimate + NADP(+) = 3-dehydroshikimate + NADPH + H(+). It participates in metabolic intermediate biosynthesis; chorismate biosynthesis; chorismate from D-erythrose 4-phosphate and phosphoenolpyruvate: step 4/7. Its function is as follows. Involved in the biosynthesis of the chorismate, which leads to the biosynthesis of aromatic amino acids. Catalyzes the reversible NADPH linked reduction of 3-dehydroshikimate (DHSA) to yield shikimate (SA). This chain is Shikimate dehydrogenase (NADP(+)), found in Shewanella oneidensis (strain ATCC 700550 / JCM 31522 / CIP 106686 / LMG 19005 / NCIMB 14063 / MR-1).